We begin with the raw amino-acid sequence, 510 residues long: NAD(P)H-quinone oxidoreductase subunit 2 B, chloroplastic (510 aa).

The next 13 helical transmembrane spans lie at 24 to 44 (LLLF…GLIL), 57 to 77 (IPWL…ALLF), 99 to 119 (IFQF…VEYI), 124 to 144 (MAIT…MFLC), 149 to 169 (LITI…LSGY), 183 to 203 (YLLM…WLYG), 227 to 247 (PGIS…LSPA), 295 to 315 (WHLL…LIAI), 323 to 343 (MLAY…IVGD), 354 to 374 (YMLF…LFGL), 395 to 415 (ALSL…AGFF), 418 to 438 (LYLF…IGLL), and 484 to 504 (MIVC…IIAI).

It belongs to the complex I subunit 2 family. NDH is composed of at least 16 different subunits, 5 of which are encoded in the nucleus.

The protein localises to the plastid. The protein resides in the chloroplast thylakoid membrane. It catalyses the reaction a plastoquinone + NADH + (n+1) H(+)(in) = a plastoquinol + NAD(+) + n H(+)(out). The enzyme catalyses a plastoquinone + NADPH + (n+1) H(+)(in) = a plastoquinol + NADP(+) + n H(+)(out). In terms of biological role, NDH shuttles electrons from NAD(P)H:plastoquinone, via FMN and iron-sulfur (Fe-S) centers, to quinones in the photosynthetic chain and possibly in a chloroplast respiratory chain. The immediate electron acceptor for the enzyme in this species is believed to be plastoquinone. Couples the redox reaction to proton translocation, and thus conserves the redox energy in a proton gradient. The sequence is that of NAD(P)H-quinone oxidoreductase subunit 2 B, chloroplastic from Daucus carota (Wild carrot).